The following is a 565-amino-acid chain: MINVNHERTMTVARKRGFLWSSFEIYSGVAGFVDYGPLGATLKNKIMNRWREFYVVREGFYEIESPTIMPEEALKASGHVDHFNDPMTQCKECMDVYRADHIIEDATGRDVEGLENQELTEIISDEGIRCPRCGGHLTHVWSYNLMFQTLIGARGKKTGYLRPETAQGIFIPFKRLLRFFRNRLPFGVVQLGKSYRNEISPRQGVIRLREFTQAEAEIFVDPEHKTHPDFEEVKEDILRLYPAGRQMEESGTVDMTAAEALEAGVISSEVLTYHLCLAKRFLMDIGIPEDALRFRQHLPSEMAHYAIDCWDVEAFTDSYGWIEIIGIADRTDYDLRSHSQHSGEDLRVFIEYDEPRRIRKRAVKPDMGKLGPKFRKDAARIASALSEVDVEEIEKALDEEGRFILEGEFEILPDDVSFEDVEEVVTGRKVYPHVIEPSFGIDRIIYTLLLHSLVDDGERTYFRLPPHVAPVEVTVLPLVNREEMVMTALEIERNLRRSGFIAEFDSSGTIGRRYARADEIGVPFAVTVDHETLEDGTVTLRNRDDCSQVRVKIEELVPTLEKLRG.

2 residues coordinate substrate: Arg98 and Glu164. ATP-binding positions include 196–198, 206–211, 323–324, and 440–443; these read RNE, IRLREF, EI, and GIDR. Substrate is bound at residue 211 to 215; sequence FTQAE. 436–440 provides a ligand contact to substrate; the sequence is EPSFG.

It belongs to the class-II aminoacyl-tRNA synthetase family.

The protein localises to the cytoplasm. The catalysed reaction is tRNA(Gly) + glycine + ATP = glycyl-tRNA(Gly) + AMP + diphosphate. In terms of biological role, catalyzes the attachment of glycine to tRNA(Gly). The sequence is that of Glycine--tRNA ligase from Methanothermobacter thermautotrophicus (strain ATCC 29096 / DSM 1053 / JCM 10044 / NBRC 100330 / Delta H) (Methanobacterium thermoautotrophicum).